Reading from the N-terminus, the 552-residue chain is Olefin beta-lactone synthetase (552 aa).

Residues 182–190, 316–321, Asp425, and Arg440 each bind ATP; these read TSGSTGVPK and TPYGAT.

This sequence belongs to the ATP-dependent AMP-binding enzyme family. Monomer.

The enzyme catalyses a (2R,3S)-2-alkyl-3-hydroxyalkanoate + ATP = a cis-3-alkyl-4-alkyloxetan-2-one + AMP + diphosphate. In terms of biological role, involved in olefin biosynthesis. Catalyzes the conversion of beta-hydroxy acid substrates to beta-lactones in the presence of ATP. Can use all four stereoisomers of 2-hexyl-3-hydroxydecanoic acid. The chain is Olefin beta-lactone synthetase from Stenotrophomonas maltophilia (strain K279a).